A 240-amino-acid chain; its full sequence is Methylthioribulose-1-phosphate dehydratase (240 aa).

Cys99 provides a ligand contact to substrate. Zn(2+)-binding residues include His116 and His118. The active-site Proton donor/acceptor is Glu145. His201 contributes to the Zn(2+) binding site.

It belongs to the aldolase class II family. MtnB subfamily. Zn(2+) serves as cofactor.

Its subcellular location is the cytoplasm. The enzyme catalyses 5-(methylsulfanyl)-D-ribulose 1-phosphate = 5-methylsulfanyl-2,3-dioxopentyl phosphate + H2O. It functions in the pathway amino-acid biosynthesis; L-methionine biosynthesis via salvage pathway; L-methionine from S-methyl-5-thio-alpha-D-ribose 1-phosphate: step 2/6. In terms of biological role, catalyzes the dehydration of methylthioribulose-1-phosphate (MTRu-1-P) into 2,3-diketo-5-methylthiopentyl-1-phosphate (DK-MTP-1-P). This is Methylthioribulose-1-phosphate dehydratase from Paracoccidioides brasiliensis (strain Pb03).